A 328-amino-acid chain; its full sequence is GTP 3',8-cyclase (328 aa).

One can recognise a Radical SAM core domain in the interval M1–A229. R8 lines the GTP pocket. [4Fe-4S] cluster is bound by residues C15 and C19. An S-adenosyl-L-methionine-binding site is contributed by Y21. Residue C22 participates in [4Fe-4S] cluster binding. R60 is a binding site for GTP. An S-adenosyl-L-methionine-binding site is contributed by G64. T91 is a GTP binding site. S115 serves as a coordination point for S-adenosyl-L-methionine. K155 serves as a coordination point for GTP. M189 is a binding site for S-adenosyl-L-methionine. Positions 252 and 255 each coordinate [4Fe-4S] cluster. R257 to R259 contacts GTP. A [4Fe-4S] cluster-binding site is contributed by C269.

It belongs to the radical SAM superfamily. MoaA family. In terms of assembly, monomer and homodimer. It depends on [4Fe-4S] cluster as a cofactor.

The enzyme catalyses GTP + AH2 + S-adenosyl-L-methionine = (8S)-3',8-cyclo-7,8-dihydroguanosine 5'-triphosphate + 5'-deoxyadenosine + L-methionine + A + H(+). The protein operates within cofactor biosynthesis; molybdopterin biosynthesis. In terms of biological role, catalyzes the cyclization of GTP to (8S)-3',8-cyclo-7,8-dihydroguanosine 5'-triphosphate. This chain is GTP 3',8-cyclase, found in Trichormus variabilis (strain ATCC 29413 / PCC 7937) (Anabaena variabilis).